An 81-amino-acid polypeptide reads, in one-letter code: Small ribosomal subunit protein bS20 (81 aa).

Belongs to the bacterial ribosomal protein bS20 family.

Functionally, binds directly to 16S ribosomal RNA. The protein is Small ribosomal subunit protein bS20 of Mycoplasma capricolum subsp. capricolum (strain California kid / ATCC 27343 / NCTC 10154).